The sequence spans 591 residues: tRNA 5-methylaminomethyl-2-thiouridine biosynthesis bifunctional protein MnmC (591 aa).

A tRNA (mnm(5)s(2)U34)-methyltransferase region spans residues 1–232 (MTPTAPSPLV…KRERLEAWRP (232 aa)). The tract at residues 247 to 591 (IGGGIAGAAL…FDSPVTRSRL (345 aa)) is FAD-dependent cmnm(5)s(2)U34 oxidoreductase.

This sequence in the N-terminal section; belongs to the methyltransferase superfamily. tRNA (mnm(5)s(2)U34)-methyltransferase family. It in the C-terminal section; belongs to the DAO family. FAD is required as a cofactor.

It is found in the cytoplasm. The catalysed reaction is 5-aminomethyl-2-thiouridine(34) in tRNA + S-adenosyl-L-methionine = 5-methylaminomethyl-2-thiouridine(34) in tRNA + S-adenosyl-L-homocysteine + H(+). Its function is as follows. Catalyzes the last two steps in the biosynthesis of 5-methylaminomethyl-2-thiouridine (mnm(5)s(2)U) at the wobble position (U34) in tRNA. Catalyzes the FAD-dependent demodification of cmnm(5)s(2)U34 to nm(5)s(2)U34, followed by the transfer of a methyl group from S-adenosyl-L-methionine to nm(5)s(2)U34, to form mnm(5)s(2)U34. This chain is tRNA 5-methylaminomethyl-2-thiouridine biosynthesis bifunctional protein MnmC, found in Caulobacter vibrioides (strain ATCC 19089 / CIP 103742 / CB 15) (Caulobacter crescentus).